A 352-amino-acid chain; its full sequence is Nuclear receptor subfamily 1 group I member 3 (352 aa).

The nuclear receptor DNA-binding region spans 8-83 (LRNCVVCGDQ…AGMRKDMILS (76 aa)). The NR C4-type zinc-finger motif lies at 11 to 31 (CVVCGDQATGYHFNALTCEGC). Threonine 38 carries the phosphothreonine; by PKC modification. The segment at 47–71 (CPFAGSCEVSKTQRRHCPACRLQKC) adopts an NR C4-type zinc-finger fold. In terms of domain architecture, NR LBD spans 109-352 (EQEELIRTLL…MMPLLQEICS (244 aa)).

It belongs to the nuclear hormone receptor family. NR1 subfamily. In terms of assembly, interacts with ECT2. Heterodimer of NR1I3 and RXR. Interacts with PSMC4. Directly interacts with DNAJC7. The DNAJC7-NR1I3 complex may also include HSP90. Interacts with CRY1. Interacts with CRY2 in a ligand-dependent manner. Post-translationally, phosphorylated at Thr-38 by PKC, dephosphorylation of Thr-38 is required for nuclear translocation and activation. Predominantly expressed in liver.

Its subcellular location is the nucleus. The protein resides in the cytoplasm. It localises to the cytoskeleton. Functionally, binds and transactivates the retinoic acid response elements that control expression of the retinoic acid receptor beta 2 and alcohol dehydrogenase 3 genes. Transactivates both the phenobarbital responsive element module of the human CYP2B6 gene and the CYP3A4 xenobiotic response element. The polypeptide is Nuclear receptor subfamily 1 group I member 3 (NR1I3) (Homo sapiens (Human)).